A 210-amino-acid chain; its full sequence is Glutathione S-transferase 3 (210 aa).

The region spanning 1–80 is the GST N-terminal domain; sequence MDFYYLPLSA…YLVEKYGKQN (80 aa). Glutathione contacts are provided by residues Ser9, 50-52, and 64-66; these read HTI and ESR. The region spanning 87 to 208 is the GST C-terminal domain; the sequence is CPKKRALINQ…AGCLEMKKYF (122 aa).

The protein belongs to the GST superfamily. Theta family. Homodimer.

The enzyme catalyses RX + glutathione = an S-substituted glutathione + a halide anion + H(+). Conjugation of reduced glutathione to a wide number of exogenous and endogenous hydrophobic electrophiles. This is Glutathione S-transferase 3 (Gst3) from Musca domestica (House fly).